The chain runs to 876 residues: Alanine--tRNA ligase (876 aa).

Positions 560, 564, 662, and 666 each coordinate Zn(2+).

Belongs to the class-II aminoacyl-tRNA synthetase family. Requires Zn(2+) as cofactor.

It is found in the cytoplasm. It carries out the reaction tRNA(Ala) + L-alanine + ATP = L-alanyl-tRNA(Ala) + AMP + diphosphate. Functionally, catalyzes the attachment of alanine to tRNA(Ala) in a two-step reaction: alanine is first activated by ATP to form Ala-AMP and then transferred to the acceptor end of tRNA(Ala). Also edits incorrectly charged Ser-tRNA(Ala) and Gly-tRNA(Ala) via its editing domain. In Synechococcus elongatus (strain ATCC 33912 / PCC 7942 / FACHB-805) (Anacystis nidulans R2), this protein is Alanine--tRNA ligase.